Reading from the N-terminus, the 159-residue chain is Large ribosomal subunit protein uL15 (159 aa).

Residues 14–44 (ASRKRVGRGRATGWGCTSGRGNKGQNSRAGA) are disordered. Over residues 23–35 (RATGWGCTSGRGN) the composition is skewed to gly residues.

The protein belongs to the universal ribosomal protein uL15 family. As to quaternary structure, part of the 50S ribosomal subunit.

Binds to the 23S rRNA. This chain is Large ribosomal subunit protein uL15, found in Solidesulfovibrio magneticus (strain ATCC 700980 / DSM 13731 / RS-1) (Desulfovibrio magneticus).